Here is a 330-residue protein sequence, read N- to C-terminus: Ferric enterobactin transport system permease protein FepG (330 aa).

At 1–7 (MIYVSRR) the chain is on the periplasmic side. Residues 8–28 (LLITCLLLVSACVVAGIWGLR) form a helical membrane-spanning segment. Residues 29-62 (SGAVTLETSQVFAALMGDAPRSMTMVVTEWRLPR) are Cytoplasmic-facing. The chain crosses the membrane as a helical span at residues 63-83 (VLMALLIGAALGVSGAIFQSL). Residues 84 to 92 (MRNPLGSPD) lie on the Periplasmic side of the membrane. A helical transmembrane segment spans residues 93 to 113 (VMGFNTGAWSGVLVAMVLFGQ). The Cytoplasmic segment spans residues 114 to 117 (DLTA). The helical transmembrane segment at 118 to 138 (IALSAMVGGIVTSLLVWLLAW) threads the bilayer. The Periplasmic segment spans residues 139–146 (RNGIDTFR). The chain crosses the membrane as a helical span at residues 147 to 167 (LIIIGIGVRAMLVAFNTWLLL). The Cytoplasmic segment spans residues 168-190 (KASLETALTAGLWNAGSLNGLTW). Residues 191-211 (AKTSPSAPIIILMLIAAALLV) traverse the membrane as a helical segment. At 212–235 (RRMRLLEMGDDTACALGVSVERSR) the chain is on the periplasmic side. A helical transmembrane segment spans residues 236–256 (LLMMLVAVVLTAAATALAGPI). The Cytoplasmic portion of the chain corresponds to 257 to 275 (SFIALVAPHIARRISGTAR). The helical transmembrane segment at 276-296 (WGLTQAALCGALLLLAADLCA) threads the bilayer. The Periplasmic portion of the chain corresponds to 297–303 (QQLFMPY). Residues 304–324 (QLPVGVVTVSLGGIYLIVLLI) form a helical membrane-spanning segment. Topologically, residues 325–330 (QESRKK) are cytoplasmic.

The protein belongs to the binding-protein-dependent transport system permease family. FecCD subfamily. As to quaternary structure, the complex is composed of two ATP-binding proteins (FepC), two transmembrane proteins (FepD and FepG) and a solute-binding protein (FepB).

It localises to the cell inner membrane. Part of the ABC transporter complex FepBDGC involved in ferric enterobactin uptake. Responsible for the translocation of the substrate across the membrane. This is Ferric enterobactin transport system permease protein FepG (fepG) from Escherichia coli (strain K12).